The primary structure comprises 298 residues: Zinc transport system membrane protein TroC (298 aa).

8 helical membrane passes run 16–36 (VVLG…FAVL), 41–61 (LFGD…FLLT), 68–88 (ILLL…LMVM), 97–117 (GAQG…LTHV), 144–164 (VLLI…FWKE), 187–207 (FMLT…VGVI), 229–249 (VLCA…SVVS), and 255–275 (LSTG…SIML).

This sequence belongs to the ABC-3 integral membrane protein family.

It localises to the cell membrane. In terms of biological role, part of an ATP-driven transport system TroABCD for zinc. The protein is Zinc transport system membrane protein TroC (troC) of Treponema pallidum (strain Nichols).